The primary structure comprises 99 residues: Plastocyanin (99 aa).

The Plastocyanin-like domain maps to 1 to 99 (VEVLLGASDG…AGMVGQVTVN (99 aa)). Cu cation-binding residues include His37, Cys84, His87, and Met92.

Belongs to the plastocyanin family. The cofactor is Cu(2+).

Its subcellular location is the plastid. It localises to the chloroplast thylakoid membrane. Participates in electron transfer between P700 and the cytochrome b6-f complex in photosystem I. This chain is Plastocyanin (PETE), found in Vicia faba (Broad bean).